We begin with the raw amino-acid sequence, 440 residues long: Chromosomal replication initiator protein DnaA (440 aa).

Positions 1-74 (MNPSQILENL…VQSGNKAIIN (74 aa)) are domain I, interacts with DnaA modulators. The interval 74 to 99 (NIQAQSAKQSNKSTKIDIAHIKAQST) is domain II. Residues 100-316 (ILNPSFTFES…GIIISLNAYA (217 aa)) are domain III, AAA+ region. ATP is bound by residues G146, G148, K149, and T150. Residues 317-440 (TILGQEITLE…KNKILVKSQS (124 aa)) form a domain IV, binds dsDNA region.

Belongs to the DnaA family. As to quaternary structure, oligomerizes as a right-handed, spiral filament on DNA at oriC.

The protein resides in the cytoplasm. In terms of biological role, plays an essential role in the initiation and regulation of chromosomal replication. ATP-DnaA binds to the origin of replication (oriC) to initiate formation of the DNA replication initiation complex once per cell cycle. Binds the DnaA box (a 9 base pair repeat at the origin) and separates the double-stranded (ds)DNA. Forms a right-handed helical filament on oriC DNA; dsDNA binds to the exterior of the filament while single-stranded (ss)DNA is stabiized in the filament's interior. The ATP-DnaA-oriC complex binds and stabilizes one strand of the AT-rich DNA unwinding element (DUE), permitting loading of DNA polymerase. After initiation quickly degrades to an ADP-DnaA complex that is not apt for DNA replication. Binds acidic phospholipids. This is Chromosomal replication initiator protein DnaA from Campylobacter jejuni subsp. jejuni serotype O:2 (strain ATCC 700819 / NCTC 11168).